We begin with the raw amino-acid sequence, 209 residues long: Small ribosomal subunit protein uS3 (209 aa).

Residues 38–107 (IRKFIKNRYY…RVVINIEEIK (70 aa)) form the KH type-2 domain.

Belongs to the universal ribosomal protein uS3 family. Part of the 30S ribosomal subunit. Forms a tight complex with proteins S10 and S14.

Binds the lower part of the 30S subunit head. Binds mRNA in the 70S ribosome, positioning it for translation. This Thermotoga petrophila (strain ATCC BAA-488 / DSM 13995 / JCM 10881 / RKU-1) protein is Small ribosomal subunit protein uS3.